The sequence spans 492 residues: N-succinylglutamate 5-semialdehyde dehydrogenase (492 aa).

220–225 (GSANTG) is a binding site for NAD(+). Active-site residues include Glu243 and Cys277.

Belongs to the aldehyde dehydrogenase family. AstD subfamily.

The catalysed reaction is N-succinyl-L-glutamate 5-semialdehyde + NAD(+) + H2O = N-succinyl-L-glutamate + NADH + 2 H(+). Its pathway is amino-acid degradation; L-arginine degradation via AST pathway; L-glutamate and succinate from L-arginine: step 4/5. Functionally, catalyzes the NAD-dependent reduction of succinylglutamate semialdehyde into succinylglutamate. This is N-succinylglutamate 5-semialdehyde dehydrogenase from Escherichia coli O81 (strain ED1a).